Reading from the N-terminus, the 343-residue chain is Protein VirB11 (343 aa).

An ATP-binding site is contributed by 169–176 (GPTGSGKT).

It belongs to the GSP E family. Post-translationally, autophosphorylated.

Its subcellular location is the cytoplasm. Functionally, required for the transfer of T-DNA to plants. Couples energy, by means of ATP hydrolysis, to T-DNA transport. The protein is Protein VirB11 (virB11) of Agrobacterium tumefaciens (strain 15955).